Here is a 295-residue protein sequence, read N- to C-terminus: 4-hydroxy-tetrahydrodipicolinate synthase (295 aa).

Thr-45 is a pyruvate binding site. The active-site Proton donor/acceptor is the Tyr-131. Lys-159 acts as the Schiff-base intermediate with substrate in catalysis. Val-202 contacts pyruvate.

This sequence belongs to the DapA family. In terms of assembly, homotetramer; dimer of dimers.

The protein resides in the cytoplasm. It catalyses the reaction L-aspartate 4-semialdehyde + pyruvate = (2S,4S)-4-hydroxy-2,3,4,5-tetrahydrodipicolinate + H2O + H(+). It participates in amino-acid biosynthesis; L-lysine biosynthesis via DAP pathway; (S)-tetrahydrodipicolinate from L-aspartate: step 3/4. In terms of biological role, catalyzes the condensation of (S)-aspartate-beta-semialdehyde [(S)-ASA] and pyruvate to 4-hydroxy-tetrahydrodipicolinate (HTPA). In Methanothrix thermoacetophila (strain DSM 6194 / JCM 14653 / NBRC 101360 / PT) (Methanosaeta thermophila), this protein is 4-hydroxy-tetrahydrodipicolinate synthase.